The chain runs to 317 residues: tRNA dimethylallyltransferase (317 aa).

18-25 (GPTATGKT) is a binding site for ATP. 20–25 (TATGKT) lines the substrate pocket. 3 interaction with substrate tRNA regions span residues 43 to 46 (DSAL), 167 to 171 (QRIQR), and 281 to 288 (KRQITWLR).

Belongs to the IPP transferase family. Monomer. The cofactor is Mg(2+).

It carries out the reaction adenosine(37) in tRNA + dimethylallyl diphosphate = N(6)-dimethylallyladenosine(37) in tRNA + diphosphate. Its function is as follows. Catalyzes the transfer of a dimethylallyl group onto the adenine at position 37 in tRNAs that read codons beginning with uridine, leading to the formation of N6-(dimethylallyl)adenosine (i(6)A). This is tRNA dimethylallyltransferase from Alkalilimnicola ehrlichii (strain ATCC BAA-1101 / DSM 17681 / MLHE-1).